A 383-amino-acid chain; its full sequence is Queuine tRNA-ribosyltransferase (383 aa).

The Proton acceptor role is filled by aspartate 90. Residues 90–94 (DSGGF), aspartate 144, glutamine 193, and glycine 227 each bind substrate. An RNA binding region spans residues 258–264 (GVGTPED). Aspartate 277 (nucleophile) is an active-site residue. An RNA binding; important for wobble base 34 recognition region spans residues 282 to 286 (TRNAR). Cysteine 315, cysteine 317, cysteine 320, and histidine 346 together coordinate Zn(2+).

This sequence belongs to the queuine tRNA-ribosyltransferase family. As to quaternary structure, homodimer. Within each dimer, one monomer is responsible for RNA recognition and catalysis, while the other monomer binds to the replacement base PreQ1. Zn(2+) serves as cofactor.

It carries out the reaction 7-aminomethyl-7-carbaguanine + guanosine(34) in tRNA = 7-aminomethyl-7-carbaguanosine(34) in tRNA + guanine. Its pathway is tRNA modification; tRNA-queuosine biosynthesis. Catalyzes the base-exchange of a guanine (G) residue with the queuine precursor 7-aminomethyl-7-deazaguanine (PreQ1) at position 34 (anticodon wobble position) in tRNAs with GU(N) anticodons (tRNA-Asp, -Asn, -His and -Tyr). Catalysis occurs through a double-displacement mechanism. The nucleophile active site attacks the C1' of nucleotide 34 to detach the guanine base from the RNA, forming a covalent enzyme-RNA intermediate. The proton acceptor active site deprotonates the incoming PreQ1, allowing a nucleophilic attack on the C1' of the ribose to form the product. After dissociation, two additional enzymatic reactions on the tRNA convert PreQ1 to queuine (Q), resulting in the hypermodified nucleoside queuosine (7-(((4,5-cis-dihydroxy-2-cyclopenten-1-yl)amino)methyl)-7-deazaguanosine). In Ralstonia pickettii (strain 12J), this protein is Queuine tRNA-ribosyltransferase.